A 284-amino-acid polypeptide reads, in one-letter code: uncharacterized protein (284 aa).

This sequence to E.coli YnjA.

This is an uncharacterized protein from Mycobacterium tuberculosis (strain CDC 1551 / Oshkosh).